Consider the following 347-residue polypeptide: Probable 3-hydroxyisobutyrate dehydrogenase, mitochondrial (347 aa).

Residues 1–34 (MAIRRAQTLLCLSKFKTNFVSGSLHRFSSSSQNS) constitute a mitochondrion transit peptide. NAD(+)-binding positions include 38-67 (QNVGFIGLGNMGFRMVNNLIRAGYKVTVHD), 101-102 (LP), and Thr134. The active site involves Lys219. Lys294 serves as a coordination point for NAD(+).

It belongs to the HIBADH-related family. 3-hydroxyisobutyrate dehydrogenase subfamily.

Its subcellular location is the mitochondrion. The catalysed reaction is 3-hydroxy-2-methylpropanoate + NAD(+) = 2-methyl-3-oxopropanoate + NADH + H(+). It functions in the pathway amino-acid degradation; L-valine degradation. The protein is Probable 3-hydroxyisobutyrate dehydrogenase, mitochondrial of Arabidopsis thaliana (Mouse-ear cress).